Consider the following 1002-residue polypeptide: Protein SMAX1-LIKE 7 (1002 aa).

In terms of domain architecture, Clp R spans 8–185 (ARQCLTEETA…DVLHPPVTSQ (178 aa)). Repeat stretches follow at residues 12–86 (LTEE…LDRL) and 103–185 (VSNS…VTSQ). The short motif at 854-858 (LDLNL) is the EAR element.

The protein belongs to the ClpA/ClpB family. Interacts with TPL/TPR in an EAR-motif dependent manner. Interacts with TPL, TPR1, TPR2 and TPR4. Interacts with MAX2 and TPR2. Interacts with D14. The interaction with D14 occurs in the presence of (2'R) stereoisomers of strigolactones, but not (2'S) stereoisomers. In terms of processing, ubiquitinated upon strigolactone treatment. Strigolactone, but not karrikin, triggers rapid SCF(MAX2)-dependent degradation. In terms of tissue distribution, expressed in axillary branches and roots. Detected in seedlings and leaves. Expressed in the primary rosette buds and expanding leaves of adult rosettes, the vasculature of the hypocotyls, cotyledons, and mature roots, and in the midvein and petioles of young leaves.

Its subcellular location is the nucleus. Functionally, probable component of a transcriptional corepressor complex involved in branching control. Regulates cotyledon expansion and lateral root growth, but not germination or hypocotyl elongation. Promotes auxin transport and PIN1 accumulation in the stem and represses BRC1/TCP18 expression in axillary buds. This is Protein SMAX1-LIKE 7 from Arabidopsis thaliana (Mouse-ear cress).